The following is a 796-amino-acid chain: Quinoprotein glucose dehydrogenase (796 aa).

The Cytoplasmic segment spans residues 1 to 10 (MAINNTGSRR). A helical transmembrane segment spans residues 11 to 37 (LLVTLTALFAALCGLYLLIGGGWLVAI). At 38–40 (GGS) the chain is on the periplasmic side. Residues 41-58 (WYYPIAGLVMLGVAWMLW) form a helical membrane-spanning segment. Topologically, residues 59-62 (RSKR) are cytoplasmic. A helical transmembrane segment spans residues 63–81 (AALWLYAALLLGTMIWGVW). Topologically, residues 82-95 (EVGFDFWALTPRSD) are periplasmic. The chain crosses the membrane as a helical span at residues 96 to 110 (ILVFFGIWLILPFVW). At 111-118 (RRLVIPAS) the chain is on the cytoplasmic side. A helical transmembrane segment spans residues 119 to 141 (GAVAALVVALLISGGILTWAGFN). Over 142-796 (DPQEINGTLS…VAYALPDDVK (655 aa)) the chain is Periplasmic. Asp-466 acts as the Proton acceptor in catalysis.

The protein belongs to the bacterial PQQ dehydrogenase family. As to quaternary structure, monomer. Pyrroloquinoline quinone serves as cofactor.

It is found in the cell inner membrane. The enzyme catalyses a ubiquinone + D-glucose = D-glucono-1,5-lactone + a ubiquinol. Functionally, GDH is probably involved in energy conservation rather than in sugar metabolism. This chain is Quinoprotein glucose dehydrogenase (gcd), found in Escherichia coli (strain K12).